Consider the following 336-residue polypeptide: UDP-3-O-acylglucosamine N-acyltransferase (336 aa).

His-236 serves as the catalytic Proton acceptor.

This sequence belongs to the transferase hexapeptide repeat family. LpxD subfamily. Homotrimer.

The enzyme catalyses a UDP-3-O-[(3R)-3-hydroxyacyl]-alpha-D-glucosamine + a (3R)-hydroxyacyl-[ACP] = a UDP-2-N,3-O-bis[(3R)-3-hydroxyacyl]-alpha-D-glucosamine + holo-[ACP] + H(+). It participates in bacterial outer membrane biogenesis; LPS lipid A biosynthesis. Catalyzes the N-acylation of UDP-3-O-acylglucosamine using 3-hydroxyacyl-ACP as the acyl donor. Is involved in the biosynthesis of lipid A, a phosphorylated glycolipid that anchors the lipopolysaccharide to the outer membrane of the cell. In Aromatoleum aromaticum (strain DSM 19018 / LMG 30748 / EbN1) (Azoarcus sp. (strain EbN1)), this protein is UDP-3-O-acylglucosamine N-acyltransferase.